The chain runs to 156 residues: Probable succinate transporter subunit YjjB (156 aa).

Helical transmembrane passes span 7-27 (WALLQDMVLAAIPALGFAMVF), 54-74 (FGMDIEPASLLASIMIGMIGI), 86-106 (VFTVAAVIPMFPGISAYTAMI), and 128-148 (FLKASFIVGSLSIGLSLPGLW).

Belongs to the ThrE exporter (TC 2.A.79) family. In terms of assembly, the transporter is composed of YjjB and YjjP.

It is found in the cell inner membrane. In terms of biological role, involved in succinate export with YjjP. Both proteins are required for export. In Yersinia enterocolitica serotype O:8 / biotype 1B (strain NCTC 13174 / 8081), this protein is Probable succinate transporter subunit YjjB.